Consider the following 173-residue polypeptide: Bifunctional protein PyrR (173 aa).

Residues 93-105 (VILVDDVLYTGRT) carry the PRPP-binding motif.

The protein belongs to the purine/pyrimidine phosphoribosyltransferase family. PyrR subfamily. In terms of assembly, homodimer and homohexamer; in equilibrium.

It carries out the reaction UMP + diphosphate = 5-phospho-alpha-D-ribose 1-diphosphate + uracil. In terms of biological role, regulates transcriptional attenuation of the pyrimidine nucleotide (pyr) operon by binding in a uridine-dependent manner to specific sites on pyr mRNA. This disrupts an antiterminator hairpin in the RNA and favors formation of a downstream transcription terminator, leading to a reduced expression of downstream genes. Also displays a weak uracil phosphoribosyltransferase activity which is not physiologically significant. In Streptococcus uberis (strain ATCC BAA-854 / 0140J), this protein is Bifunctional protein PyrR.